The sequence spans 445 residues: Arabinooligosaccharide-binding protein (445 aa).

A signal peptide spans Met-1–Ala-20. Cys-21 carries N-palmitoyl cysteine lipidation. The S-diacylglycerol cysteine moiety is linked to residue Cys-21.

Belongs to the bacterial solute-binding protein 1 family. As to quaternary structure, the complex is composed of two ATP-binding proteins (MsmX), two transmembrane proteins (AraP and AraQ) and a solute-binding protein (AraN).

Its subcellular location is the cell membrane. Its function is as follows. Part of the ABC transporter complex AraNPQ involved in the uptake of arabinooligosaccharides. AraN captures the substrate and delivers it to the two transmembrane components. This Halalkalibacterium halodurans (strain ATCC BAA-125 / DSM 18197 / FERM 7344 / JCM 9153 / C-125) (Bacillus halodurans) protein is Arabinooligosaccharide-binding protein (araN).